We begin with the raw amino-acid sequence, 1179 residues long: Protein turtle homolog A (1179 aa).

The first 20 residues, 1–20 (MIWCLRLTVLSLIISQGADG), serve as a signal peptide directing secretion. At 21 to 734 (RRKPEVVSVV…TQLPGLLPQP (714 aa)) the chain is on the extracellular side. 5 Ig-like domains span residues 24 to 124 (PEVV…DFAN), 136 to 216 (PQFQ…GSIT), 226 to 318 (PPVI…AYLT), 322 to 410 (PAQV…SPVT), and 418 to 502 (PAFI…TNVY). Disulfide bonds link C41–C108 and C158–C206. Residues N188, N239, and N256 are each glycosylated (N-linked (GlcNAc...) asparagine). 3 cysteine pairs are disulfide-bonded: C248–C301, C344–C395, and C440–C486. Fibronectin type-III domains lie at 507–611 (SPHV…TTPA) and 623–718 (PLSP…TSGL). N-linked (GlcNAc...) asparagine glycosylation is found at N513 and N524. The helical transmembrane segment at 735-755 (VLAGVVGGVCFLGVAVLVSIL) threads the bilayer. Over 756 to 1179 (AACLMNRRRA…ISYPEQATLL (424 aa)) the chain is Cytoplasmic. The disordered stretch occupies residues 767–807 (RRHRKRLRQDPPLIFSPRGKSGSHSAPGSGSPDSVTKFKLQ). Residues 785–800 (GKSGSHSAPGSGSPDS) show a composition bias toward low complexity. S809 carries the phosphoserine modification. Disordered stretches follow at residues 819 to 842 (LWGE…PLPL), 942 to 974 (PPLE…DSPP), and 1016 to 1079 (APRG…KRRN). Over residues 944–954 (LEEPTPAPPPD) the composition is skewed to pro residues. Positions 1020–1029 (SLTSQSSGRG) are enriched in polar residues. The PDZ-binding motif lies at 1177-1179 (TLL).

The protein belongs to the immunoglobulin superfamily. Turtle family. In terms of assembly, interacts with MAGI2 and SHANK1. In terms of tissue distribution, expressed in both cell bodies and dendrites of cortical and hippocampal neurons and also cerebellar Purkinje cells (at protein level).

Its subcellular location is the cell membrane. The protein localises to the synapse. Its function is as follows. Functions in dendrite outgrowth and synapse maturation. The protein is Protein turtle homolog A (Igsf9) of Mus musculus (Mouse).